We begin with the raw amino-acid sequence, 342 residues long: Glutamyl endopeptidase (342 aa).

Residues 1–29 (MKGKFLKVSSLFVATLTTATLVSSPAANA) form the signal peptide. Positions 30 to 68 (LSSKAMDNHPQQTQSSKQQTPKIKKGGNLKPLEQREHAN) are excised as a propeptide. The segment at 33–63 (KAMDNHPQQTQSSKQQTPKIKKGGNLKPLEQ) is disordered. Residues 39 to 50 (PQQTQSSKQQTP) are compositionally biased toward low complexity. Catalysis depends on charge relay system residues H119, D161, and S237. Residues 283 to 342 (FANDDQPNNPDNPDNPNNPDNPNNPDNPNNPDEPNNPDNPNNPDNPDNGDNNNSDNPDAA) are disordered. The segment covering 286-342 (DDQPNNPDNPDNPNNPDNPNNPDNPNNPDEPNNPDNPNNPDNPDNGDNNNSDNPDAA) has biased composition (low complexity). Repeat copies occupy residues 289-291 (PNN), 292-294 (PDN), 295-297 (PDN), 298-300 (PNN), 301-303 (PDN), 304-306 (PNN), 307-309 (PDN), 310-312 (PNN), 316-318 (PNN), 319-321 (PDN), 322-324 (PNN), 325-327 (PDN), and 328-330 (PDN). The interval 289 to 330 (PNNPDNPDNPNNPDNPNNPDNPNNPDEPNNPDNPNNPDNPDN) is 13 X 3 AA repeats of P-[DN]-N.

Belongs to the peptidase S1B family. Post-translationally, proteolytically cleaved by aureolysin (aur). This cleavage leads to the activation of SspA.

It localises to the secreted. The catalysed reaction is Preferential cleavage: Glu-|-Xaa, Asp-|-Xaa.. Preferentially cleaves peptide bonds on the carboxyl-terminal side of aspartate and glutamate. Along with other extracellular proteases it is involved in colonization and infection of human tissues. Required for proteolytic maturation of thiol protease SspB and inactivation of SspC, an inhibitor of SspB. It is the most important protease for degradation of fibronectin-binding protein (FnBP) and surface protein A, which are involved in adherence to host cells. May also protect bacteria against host defense mechanism by cleaving the immunoglobulin classes IgG, IgA and IgM. May be involved in the stability of secreted lipases. This Staphylococcus aureus (strain Mu50 / ATCC 700699) protein is Glutamyl endopeptidase (sspA).